Here is a 111-residue protein sequence, read N- to C-terminus: Universal stress protein B (111 aa).

The next 2 membrane-spanning stretches (helical) occupy residues 1-21 (MIST…NMAR) and 90-110 (FLLT…MMMW).

It belongs to the universal stress protein B family.

It is found in the cell inner membrane. This Pectobacterium atrosepticum (strain SCRI 1043 / ATCC BAA-672) (Erwinia carotovora subsp. atroseptica) protein is Universal stress protein B.